An 89-amino-acid chain; its full sequence is Phosphoribulokinase, chloroplastic (89 aa).

The disordered stretch occupies residues 1–22 (LTSVFGGAAEPPRGGNPDSNTL).

It belongs to the phosphoribulokinase family.

Its subcellular location is the plastid. The protein localises to the chloroplast. It catalyses the reaction D-ribulose 5-phosphate + ATP = D-ribulose 1,5-bisphosphate + ADP + H(+). It functions in the pathway carbohydrate biosynthesis; Calvin cycle. Its activity is regulated as follows. Light regulated via thioredoxin by reversible oxidation/reduction of sulfhydryl/disulfide groups. The sequence is that of Phosphoribulokinase, chloroplastic from Vitis sp. (Grape).